Reading from the N-terminus, the 251-residue chain is Triosephosphate isomerase (251 aa).

Position 9–11 (9–11 (NWK)) interacts with substrate. Catalysis depends on His-94, which acts as the Electrophile. The active-site Proton acceptor is the Glu-167. Residues Gly-173, Ser-213, and 234–235 (GG) each bind substrate.

This sequence belongs to the triosephosphate isomerase family. In terms of assembly, homodimer.

The protein localises to the cytoplasm. The catalysed reaction is D-glyceraldehyde 3-phosphate = dihydroxyacetone phosphate. Its pathway is carbohydrate biosynthesis; gluconeogenesis. The protein operates within carbohydrate degradation; glycolysis; D-glyceraldehyde 3-phosphate from glycerone phosphate: step 1/1. In terms of biological role, involved in the gluconeogenesis. Catalyzes stereospecifically the conversion of dihydroxyacetone phosphate (DHAP) to D-glyceraldehyde-3-phosphate (G3P). This chain is Triosephosphate isomerase, found in Finegoldia magna (strain ATCC 29328 / DSM 20472 / WAL 2508) (Peptostreptococcus magnus).